A 159-amino-acid chain; its full sequence is Ribosome maturation factor RimP (159 aa).

The protein belongs to the RimP family.

It localises to the cytoplasm. Required for maturation of 30S ribosomal subunits. The protein is Ribosome maturation factor RimP of Bordetella avium (strain 197N).